The following is a 514-amino-acid chain: MRFKLDGRIIFSKDVEEETQKDIVEVLENRDIFLKGVPEGKENEASKIETYEFDGKDLKLKMTSGTYTRAHEGIVRLKKPIMEKVGRKHQIGIRDVAIDKYIVTLTAEPSKVSELKGLKVPECEVELESEKINIVFENLGDGELKRNIIDRAIKFVKNELDKQDQDLTFEVCKIAPGTIVSDYKAKREITFDTDPTELAEPYGWVKRFPGRGQWFYTAPMAKLFRAFESIIIEECIDKIGFDECLFPKLIPLDVMYKMRYLEGLPEGMYYVCPPKREPEMFQDFVNEMMIKKEIPIEKLKTLLRDPAYVLAPAQCEPFYTFFDHELVDVDHPSKFFDKSGWTYRWEGGGAKGLDRVNEFLRGECVWMGTPEFVEKVRDDTLKYAEKLAEKLDLEYWTEVGDDPFYLEGRKSEARGIEFPDVPKYEMRLWLPHVKEERKGVAVTSANIHGTHFVEGFGIKDYKERKVWTGCTGYGLTRWVIGFLAQYGYNYDDWPELIQKKVGKLPEIPKVITWP.

A313 serves as a coordination point for L-serine. Zn(2+) is bound at residue C315. Position 344 (R344) interacts with L-serine. Residues R344–E346 and R355–V356 each bind ATP. R361–E363 provides a ligand contact to L-serine. Residues E363 and C470 each coordinate Zn(2+). R477 serves as a coordination point for ATP.

This sequence belongs to the class-II aminoacyl-tRNA synthetase family. Type-2 seryl-tRNA synthetase subfamily. As to quaternary structure, homodimer. Requires Zn(2+) as cofactor.

It is found in the cytoplasm. The enzyme catalyses tRNA(Ser) + L-serine + ATP = L-seryl-tRNA(Ser) + AMP + diphosphate + H(+). It carries out the reaction tRNA(Sec) + L-serine + ATP = L-seryl-tRNA(Sec) + AMP + diphosphate + H(+). It functions in the pathway aminoacyl-tRNA biosynthesis; selenocysteinyl-tRNA(Sec) biosynthesis; L-seryl-tRNA(Sec) from L-serine and tRNA(Sec): step 1/1. Catalyzes the attachment of serine to tRNA(Ser). Is also able to aminoacylate tRNA(Sec) with serine, to form the misacylated tRNA L-seryl-tRNA(Sec), which will be further converted into selenocysteinyl-tRNA(Sec). This is Type-2 serine--tRNA ligase from Methanococcus maripaludis (strain C5 / ATCC BAA-1333).